The following is a 248-amino-acid chain: UPF0246 protein A1I_02510 (248 aa).

The protein belongs to the UPF0246 family.

The sequence is that of UPF0246 protein A1I_02510 from Rickettsia bellii (strain OSU 85-389).